The following is a 98-amino-acid chain: NADH-ubiquinone oxidoreductase chain 4L (98 aa).

3 helical membrane passes run 1–21 (MSPL…GLAF), 26–46 (LISA…PLSI), and 56–76 (FALV…TGLA).

It belongs to the complex I subunit 4L family. As to quaternary structure, core subunit of respiratory chain NADH dehydrogenase (Complex I) which is composed of 45 different subunits.

The protein resides in the mitochondrion inner membrane. It catalyses the reaction a ubiquinone + NADH + 5 H(+)(in) = a ubiquinol + NAD(+) + 4 H(+)(out). Its function is as follows. Core subunit of the mitochondrial membrane respiratory chain NADH dehydrogenase (Complex I) which catalyzes electron transfer from NADH through the respiratory chain, using ubiquinone as an electron acceptor. Part of the enzyme membrane arm which is embedded in the lipid bilayer and involved in proton translocation. This Gallus gallus (Chicken) protein is NADH-ubiquinone oxidoreductase chain 4L (MT-ND4L).